The primary structure comprises 107 residues: Histone H4 (107 aa).

Residues 1–16 are compositionally biased toward gly residues; it reads MPGRGKGGKGGKGYGK. Positions 1–23 are disordered; sequence MPGRGKGGKGGKGYGKVGAKRHA. A DNA-binding region spans residues 17-21; it reads VGAKR.

It belongs to the histone H4 family. As to quaternary structure, the nucleosome is a histone octamer containing two molecules each of H2A, H2B, H3 and H4 assembled in one H3-H4 heterotetramer and two H2A-H2B heterodimers. The octamer wraps approximately 147 bp of DNA.

It localises to the nucleus. The protein localises to the chromosome. Functionally, core component of nucleosome. Nucleosomes wrap and compact DNA into chromatin, limiting DNA accessibility to the cellular machineries which require DNA as a template. Histones thereby play a central role in transcription regulation, DNA repair, DNA replication and chromosomal stability. DNA accessibility is regulated via a complex set of post-translational modifications of histones, also called histone code, and nucleosome remodeling. The chain is Histone H4 from Euplotes crassus.